Reading from the N-terminus, the 326-residue chain is H-2 class I histocompatibility antigen, Q8 alpha chain (326 aa).

An N-terminal signal peptide occupies residues 1-21 (MALTMLLLLVAAALTLIETRA). Residues 22-111 (GPHSLRYFHT…AQRYYNQSKG (90 aa)) are alpha-1. Residues 22 to 305 (GPHSLRYFHT…EPPPSTVSNM (284 aa)) lie on the Extracellular side of the membrane. N-linked (GlcNAc...) asparagine glycosylation is present at Asn107. The tract at residues 112–203 (GSHTLQWMYG…QLRKETLLCT (92 aa)) is alpha-2. Disulfide bonds link Cys122-Cys185 and Cys224-Cys280. Positions 204-295 (DPPKAHVTHH…GLPEPLTLRW (92 aa)) are alpha-3. The Ig-like C1-type domain maps to 206–294 (PKAHVTHHPR…EGLPEPLTLR (89 aa)). An N-linked (GlcNAc...) asparagine glycan is attached at Asn277. Residues 296–305 (EPPPSTVSNM) form a connecting peptide region. The chain crosses the membrane as a helical span at residues 306-326 (ANVAILVVLVAWPSLELWWIL).

It belongs to the MHC class I family. As to quaternary structure, heterodimer of an alpha chain and a beta chain (beta-2-microglobulin).

It is found in the membrane. In terms of biological role, involved in the presentation of foreign antigens to the immune system. The protein is H-2 class I histocompatibility antigen, Q8 alpha chain (H2-Q8) of Mus musculus (Mouse).